The following is a 349-amino-acid chain: Histone-lysine N-methyltransferase ATXR6 (349 aa).

The tract at residues 1–28 is disordered; it reads MVAVRRRRTQASNPRSEPPQHMSDHDSD. The PHD-type zinc-finger motif lies at 32–82; that stretch reads DTVCEECSSGKQPAKLLLCDKCDKGFHLFCLRPILVSVPKGSWFCPSCSKH. Positions 92-99 match the PIP motif motif; the sequence is QTKIIDFF. A disordered region spans residues 105–126; it reads PDSSQISSSSDSIGKKRKKTSL. Low complexity predominate over residues 106–116; sequence DSSQISSSSDS. M190 is a substrate binding site. Positions 214–337 constitute an SET domain; sequence PPLMVVFDPY…KGERLYYDYN (124 aa). S-adenosyl-L-methionine is bound by residues 224–226 and 287–291; these read EGF and RFISG. Substrate-binding positions include R309 and 339–340; that span reads YE. Positions 343 and 349 each coordinate S-adenosyl-L-methionine.

The protein belongs to the class V-like SAM-binding methyltransferase superfamily. Histone-lysine methyltransferase family. TRX/MLL subfamily. In terms of assembly, interacts with PCNA1 and PCNA2. Interacts (via PHD domain) with HTR1 (via N-terminus). Interacts with IPS1. Expressed in leaves, roots, stems, flowers and siliques. Up-regulated in tissues where cell division is active.

It is found in the nucleus. It carries out the reaction L-lysyl(27)-[histone H3] + S-adenosyl-L-methionine = N(6)-methyl-L-lysyl(27)-[histone H3] + S-adenosyl-L-homocysteine + H(+). Functionally, histone methyltransferase that specifically monomethylates 'Lys-27' of histone H3 (H3K27me1). Has higher activity on nucleosomes containing H3.1 than H3.3. Involved in the formation of constitutive heterochromatin and the silencing of heterochromatic elements. May act as a positive regulator of the G1-S transition. Influences which sets of rRNA gene variants are expressed or silenced. Up-regulated by E2FB. This chain is Histone-lysine N-methyltransferase ATXR6 (ATXR6), found in Arabidopsis thaliana (Mouse-ear cress).